Consider the following 360-residue polypeptide: Peptide chain release factor 1 (360 aa).

Gln-236 is subject to N5-methylglutamine.

Belongs to the prokaryotic/mitochondrial release factor family. Post-translationally, methylated by PrmC. Methylation increases the termination efficiency of RF1.

It localises to the cytoplasm. Functionally, peptide chain release factor 1 directs the termination of translation in response to the peptide chain termination codons UAG and UAA. This is Peptide chain release factor 1 from Ligilactobacillus salivarius (strain UCC118) (Lactobacillus salivarius).